Here is a 329-residue protein sequence, read N- to C-terminus: MTWRDEIARRVRGEHLRDAPLAPRTAVRVGGPADLLCRPADGDALSALLRAVRELGVPLSVLGGGANTLVADAGVRGVVLRLPQEFPGESTDGGTLVLSAGAPISRLPARAHAHGLVGMEFLGGIPGTLGGAAAMNAGTRLGEMKDVVTRLELATPDGTGFVPASALGYAYRTCRLPPGAVIARVEVRLHAGDVAASEALMREDRERRRATQPLDRPTFGSTFTNPPGEYAGRLVEAVGLKGHRVGNAIWSPVHANFVTNLGGATARDVLALVRLARARVKERFGIALETEVRLMGEFLDEDLEGLDGHAAAGGGPGAASGGVRPPEAT.

The 165-residue stretch at 28–192 folds into the FAD-binding PCMH-type domain; sequence RVGGPADLLC…ARVEVRLHAG (165 aa). R172 is a catalytic residue. A disordered region spans residues 202–227; that stretch reads REDRERRRATQPLDRPTFGSTFTNPP. Catalysis depends on S221, which acts as the Proton donor. E291 is a catalytic residue. Positions 307–329 are disordered; that stretch reads DGHAAAGGGPGAASGGVRPPEAT. A compositionally biased stretch (gly residues) spans 311–320; sequence AAGGGPGAAS.

The protein belongs to the MurB family. FAD is required as a cofactor.

The protein resides in the cytoplasm. The catalysed reaction is UDP-N-acetyl-alpha-D-muramate + NADP(+) = UDP-N-acetyl-3-O-(1-carboxyvinyl)-alpha-D-glucosamine + NADPH + H(+). It functions in the pathway cell wall biogenesis; peptidoglycan biosynthesis. Its function is as follows. Cell wall formation. In Anaeromyxobacter sp. (strain K), this protein is UDP-N-acetylenolpyruvoylglucosamine reductase.